The following is a 308-amino-acid chain: Pseudouridine-5'-phosphate glycosidase (308 aa).

The active-site Proton donor is the glutamate 29. Substrate-binding residues include lysine 90 and valine 110. Position 142 (aspartate 142) interacts with Mn(2+). 144–146 (SSD) is a binding site for substrate. Lysine 163 (nucleophile) is an active-site residue.

It belongs to the pseudouridine-5'-phosphate glycosidase family. In terms of assembly, homotrimer. The cofactor is Mn(2+).

It carries out the reaction D-ribose 5-phosphate + uracil = psi-UMP + H2O. Its function is as follows. Catalyzes the reversible cleavage of pseudouridine 5'-phosphate (PsiMP) to ribose 5-phosphate and uracil. Functions biologically in the cleavage direction, as part of a pseudouridine degradation pathway. This Serratia proteamaculans (strain 568) protein is Pseudouridine-5'-phosphate glycosidase.